The chain runs to 91 residues: Tachykinin-like peptide (91 aa).

The first 19 residues, 1–19, serve as a signal peptide directing secretion; sequence MKILVAFAVIMLVSAQVLA. Positions 20-51 are excised as a propeptide; that stretch reads AEIGLNDEPEWYSDQIQEDLPVFENFLQRIAR. Methionine amide is present on methionine 62. The disordered stretch occupies residues 64 to 91; the sequence is KRNNGFGQMSRKRSAERNTIHNYERRRK. The propeptide occupies 66–91; it reads NNGFGQMSRKRSAERNTIHNYERRRK. Positions 76-91 are enriched in basic and acidic residues; the sequence is RSAERNTIHNYERRRK.

As to expression, expressed by the skin glands.

It localises to the secreted. Functionally, tachykinins are active peptides which excite neurons, evoke behavioral responses, are potent vasodilators and secretagogues, and contract (directly or indirectly) many smooth muscles. In vitro, induces contraction of guinea pig ileum smooth muscle in a dose-dependent manner. The chain is Tachykinin-like peptide from Theloderma corticale (Kwangsi warty tree frog).